We begin with the raw amino-acid sequence, 55 residues long: Variant surface glycoprotein ETAT 1.2 (55 aa).

A glycan (N-linked (GlcNAc...) asparagine) is linked at N34. N38 is lipidated: GPI-anchor amidated asparagine. The propeptide at 39-55 is removed in mature form; it reads NSFAIKTSTLLLAVLLF.

It localises to the cell membrane. In terms of biological role, VSG forms a coat on the surface of the parasite. The trypanosome evades the immune response of the host by expressing a series of antigenically distinct VSGs from an estimated 1000 VSG genes. The sequence is that of Variant surface glycoprotein ETAT 1.2 from Trypanosoma brucei rhodesiense.